A 46-amino-acid chain; its full sequence is MQVLNSLRSAKQRHPDCQIVKRKGRLYVICKSNPRFKAVQGRKKRR.

It belongs to the bacterial ribosomal protein bL36 family.

The protein is Large ribosomal subunit protein bL36B of Enterobacter sp. (strain 638).